The following is a 212-amino-acid chain: Ribosomal RNA small subunit methyltransferase G (212 aa).

S-adenosyl-L-methionine-binding positions include Gly80, Leu85, 131-132 (AE), and Arg146.

The protein belongs to the methyltransferase superfamily. RNA methyltransferase RsmG family.

It localises to the cytoplasm. The enzyme catalyses guanosine(527) in 16S rRNA + S-adenosyl-L-methionine = N(7)-methylguanosine(527) in 16S rRNA + S-adenosyl-L-homocysteine. Functionally, specifically methylates the N7 position of guanine in position 527 of 16S rRNA. The polypeptide is Ribosomal RNA small subunit methyltransferase G (Xylella fastidiosa (strain 9a5c)).